The sequence spans 436 residues: Forkhead box protein I3 (436 aa).

A Phosphoserine modification is found at S132. The segment at residues 158-252 (RPPYSYSALI…DNGNFRRKRK (95 aa)) is a DNA-binding region (fork-head). The short motif at 248–254 (RRKRKRR) is the Nuclear localization signal element. Disordered regions lie at residues 249–319 (RKRK…PGGS) and 340–410 (SSSG…SGGQ). Residues 257–277 (ASSASTSTVAAGTTKSEEGLS) are compositionally biased toward low complexity. The span at 278–287 (SGLGSGVGGK) shows a compositional bias: gly residues. Residues S292 and S302 each carry the phosphoserine modification. Low complexity predominate over residues 385–410 (SNGASSGSGQRSSYYSPFPASTSGGQ). A 9aaTAD motif is present at residues 422–430 (SMVNSLIYP).

In terms of processing, phosphorylation promotes the transcription factor activity. Dephosphorylation by protein phosphatase 2A (PP2A) reduces its activity.

Its subcellular location is the nucleus. Functionally, transcription factor required for pharyngeal arch development, and which is involved in hair, ear, jaw and dental development. May act as a pioneer transcription factor during pharyngeal arch development. Required for the development of the epithelium of hair and whisker placodes and that of teeth. Required for hair follicle stem cell specification. Acts downstream of TBX1 for the formation of the thymus and parathyroid glands from the third pharyngeal pouch. The chain is Forkhead box protein I3 from Canis lupus familiaris (Dog).